The following is a 437-amino-acid chain: Serine carboxypeptidase-like 10 (437 aa).

The signal sequence occupies residues 1 to 21 (MGSTLKHLLLLLLVLIRHVDS). Disulfide bonds link Cys80/Cys327, Cys243/Cys257, and Cys281/Cys293. The N-linked (GlcNAc...) asparagine glycan is linked to Asn101. Ser175 is a catalytic residue. N-linked (GlcNAc...) asparagine glycosylation is present at Asn328. Asp362 is a catalytic residue. The N-linked (GlcNAc...) asparagine glycan is linked to Asn378. The active site involves His415. Residue Asn422 is glycosylated (N-linked (GlcNAc...) asparagine).

This sequence belongs to the peptidase S10 family. Expressed in senescent leaves.

It localises to the secreted. Involved in the biosynthesis of sinapoylated anthocyanins. In Arabidopsis thaliana (Mouse-ear cress), this protein is Serine carboxypeptidase-like 10 (SCPL10).